The chain runs to 97 residues: Small cell adhesion glycoprotein (97 aa).

At 1 to 36 (MNNLPATPSPEELMTTPVFQAPETMSPQAEEASTAL) the chain is on the extracellular side. Thr7 carries O-linked (GalNAc...) threonine glycosylation. Residue Ser9 is glycosylated (O-linked (GalNAc...) serine). O-linked (GalNAc...) threonine glycans are attached at residues Thr15, Thr16, and Thr24. An O-linked (GalNAc...) serine glycan is attached at Ser26. A helical; Signal-anchor for type III membrane protein transmembrane segment spans residues 37 to 57 (IAVVITVVFLTLLSVVTLIFF). Topologically, residues 58 to 97 (YLYKNKGSYVTYEPAEGEPSAILQMETDSAKGKEKEEYFI) are cytoplasmic.

It belongs to the SMAGP family. O-glycosylated. The O-glycan is modified with sialic acid residues. As to expression, detected in brain (at protein level). Highly expressed in kidney and placenta. Detected in skin, breast, heart, lung, liver, prostate, spleen, small intestine, colon and stomach.

The protein localises to the cell membrane. It localises to the cytoplasmic vesicle membrane. In terms of biological role, may play a role in epithelial cell-cell contacts. May play a role in tumor invasiveness and metastasis formation. This is Small cell adhesion glycoprotein (Smagp) from Rattus norvegicus (Rat).